We begin with the raw amino-acid sequence, 493 residues long: Protein nucleotidyltransferase YdiU (493 aa).

Positions 96, 98, 99, 119, 131, 132, 182, and 189 each coordinate ATP. Asp258 functions as the Proton acceptor in the catalytic mechanism. 2 residues coordinate Mg(2+): Asn259 and Asp268. Residue Asp268 coordinates ATP. The disordered stretch occupies residues 471-493; it reads EKYTEFKNPPAPKERVSQTFCGT.

Belongs to the SELO family. Requires Mg(2+) as cofactor. Mn(2+) serves as cofactor.

The catalysed reaction is L-seryl-[protein] + ATP = 3-O-(5'-adenylyl)-L-seryl-[protein] + diphosphate. The enzyme catalyses L-threonyl-[protein] + ATP = 3-O-(5'-adenylyl)-L-threonyl-[protein] + diphosphate. It carries out the reaction L-tyrosyl-[protein] + ATP = O-(5'-adenylyl)-L-tyrosyl-[protein] + diphosphate. It catalyses the reaction L-histidyl-[protein] + UTP = N(tele)-(5'-uridylyl)-L-histidyl-[protein] + diphosphate. The catalysed reaction is L-seryl-[protein] + UTP = O-(5'-uridylyl)-L-seryl-[protein] + diphosphate. The enzyme catalyses L-tyrosyl-[protein] + UTP = O-(5'-uridylyl)-L-tyrosyl-[protein] + diphosphate. Nucleotidyltransferase involved in the post-translational modification of proteins. It can catalyze the addition of adenosine monophosphate (AMP) or uridine monophosphate (UMP) to a protein, resulting in modifications known as AMPylation and UMPylation. This Nitrosococcus oceani (strain ATCC 19707 / BCRC 17464 / JCM 30415 / NCIMB 11848 / C-107) protein is Protein nucleotidyltransferase YdiU.